An 802-amino-acid polypeptide reads, in one-letter code: G-type lectin S-receptor-like serine/threonine-protein kinase At1g61550 (802 aa).

The first 19 residues, methionine 1–alanine 19, serve as a signal peptide directing secretion. Positions alanine 20–phenylalanine 139 constitute a Bulb-type lectin domain. At alanine 20–threonine 421 the chain is on the extracellular side. Asparagine 48, asparagine 89, asparagine 112, asparagine 231, and asparagine 262 each carry an N-linked (GlcNAc...) asparagine glycan. One can recognise an EGF-like domain in the interval proline 273 to glutamate 309. Intrachain disulfides connect cysteine 277–cysteine 289 and cysteine 283–cysteine 297. 3 N-linked (GlcNAc...) asparagine glycosylation sites follow: asparagine 315, asparagine 331, and asparagine 370. One can recognise a PAN domain in the interval cysteine 328 to serine 410. 2 cysteine pairs are disulfide-bonded: cysteine 363–cysteine 384 and cysteine 367–cysteine 373. Residues isoleucine 422 to phenylalanine 442 traverse the membrane as a helical segment. Topologically, residues tryptophan 443 to arginine 802 are cytoplasmic. The region spanning phenylalanine 489 to phenylalanine 774 is the Protein kinase domain. ATP-binding positions include leucine 495 to valine 503 and lysine 517. A phosphoserine mark is found at serine 523 and serine 538. Residues arginine 578–isoleucine 595 are caM-binding. The active-site Proton acceptor is the aspartate 614. 2 positions are modified to phosphoserine: serine 618 and serine 631. Threonine 648 is modified (phosphothreonine). Serine 691 bears the Phosphoserine mark.

The protein belongs to the protein kinase superfamily. Ser/Thr protein kinase family.

It localises to the cell membrane. It catalyses the reaction L-seryl-[protein] + ATP = O-phospho-L-seryl-[protein] + ADP + H(+). The catalysed reaction is L-threonyl-[protein] + ATP = O-phospho-L-threonyl-[protein] + ADP + H(+). This chain is G-type lectin S-receptor-like serine/threonine-protein kinase At1g61550, found in Arabidopsis thaliana (Mouse-ear cress).